The following is a 130-amino-acid chain: Large ribosomal subunit protein uL22 (130 aa).

The protein belongs to the universal ribosomal protein uL22 family. As to quaternary structure, part of the 50S ribosomal subunit.

In terms of biological role, this protein binds specifically to 23S rRNA; its binding is stimulated by other ribosomal proteins, e.g. L4, L17, and L20. It is important during the early stages of 50S assembly. It makes multiple contacts with different domains of the 23S rRNA in the assembled 50S subunit and ribosome. Its function is as follows. The globular domain of the protein is located near the polypeptide exit tunnel on the outside of the subunit, while an extended beta-hairpin is found that lines the wall of the exit tunnel in the center of the 70S ribosome. The protein is Large ribosomal subunit protein uL22 of Clavibacter sepedonicus (Clavibacter michiganensis subsp. sepedonicus).